The sequence spans 391 residues: Aspartate aminotransferase (391 aa).

Positions 40 and 176 each coordinate L-aspartate. Position 236 is an N6-(pyridoxal phosphate)lysine (Lys236). Arg366 contributes to the L-aspartate binding site.

Belongs to the class-I pyridoxal-phosphate-dependent aminotransferase family. In terms of assembly, homodimer. It depends on pyridoxal 5'-phosphate as a cofactor.

Its subcellular location is the cytoplasm. The catalysed reaction is L-aspartate + 2-oxoglutarate = oxaloacetate + L-glutamate. The chain is Aspartate aminotransferase (aspC) from Pyrococcus horikoshii (strain ATCC 700860 / DSM 12428 / JCM 9974 / NBRC 100139 / OT-3).